A 78-amino-acid chain; its full sequence is DNA-directed RNA polymerase subunit Rpo5 (78 aa).

It belongs to the archaeal Rpo5/eukaryotic RPB5 RNA polymerase subunit family. As to quaternary structure, part of the RNA polymerase complex.

It is found in the cytoplasm. It catalyses the reaction RNA(n) + a ribonucleoside 5'-triphosphate = RNA(n+1) + diphosphate. In terms of biological role, DNA-dependent RNA polymerase (RNAP) catalyzes the transcription of DNA into RNA using the four ribonucleoside triphosphates as substrates. The chain is DNA-directed RNA polymerase subunit Rpo5 from Methanococcus vannielii (strain ATCC 35089 / DSM 1224 / JCM 13029 / OCM 148 / SB).